The primary structure comprises 265 residues: 4-hydroxy-tetrahydrodipicolinate reductase (265 aa).

Position 9–14 (9–14 (GPRGRM)) interacts with NAD(+). Residue Arg37 coordinates NADP(+). Residues 98–100 (GTT) and 124–127 (APNF) each bind NAD(+). His154 (proton donor/acceptor) is an active-site residue. His155 is a (S)-2,3,4,5-tetrahydrodipicolinate binding site. The active-site Proton donor is the Lys158. 164-165 (GT) provides a ligand contact to (S)-2,3,4,5-tetrahydrodipicolinate.

Belongs to the DapB family.

It localises to the cytoplasm. It carries out the reaction (S)-2,3,4,5-tetrahydrodipicolinate + NAD(+) + H2O = (2S,4S)-4-hydroxy-2,3,4,5-tetrahydrodipicolinate + NADH + H(+). It catalyses the reaction (S)-2,3,4,5-tetrahydrodipicolinate + NADP(+) + H2O = (2S,4S)-4-hydroxy-2,3,4,5-tetrahydrodipicolinate + NADPH + H(+). It participates in amino-acid biosynthesis; L-lysine biosynthesis via DAP pathway; (S)-tetrahydrodipicolinate from L-aspartate: step 4/4. In terms of biological role, catalyzes the conversion of 4-hydroxy-tetrahydrodipicolinate (HTPA) to tetrahydrodipicolinate. The protein is 4-hydroxy-tetrahydrodipicolinate reductase of Geobacillus thermodenitrificans (strain NG80-2).